The following is a 230-amino-acid chain: Nicotinamide riboside kinase (230 aa).

12-20 (GASCSGKST) is a binding site for ATP. Positions 19 and 38 each coordinate Mg(2+). Residue D38 is the Proton acceptor of the active site. Residues 38–41 (DDFY) and 56–57 (WD) each bind substrate. ATP is bound at residue R153. Substrate-binding positions include R154 and 159–160 (GY). ATP is bound by residues 157-159 (RTG) and 203-205 (RIQ).

It belongs to the uridine kinase family. NRK subfamily.

It carries out the reaction beta-nicotinamide D-riboside + ATP = beta-nicotinamide D-ribonucleotide + ADP + H(+). The catalysed reaction is beta-D-ribosylnicotinate + ATP = nicotinate beta-D-ribonucleotide + ADP + H(+). Its pathway is cofactor biosynthesis; NAD(+) biosynthesis. Functionally, catalyzes the phosphorylation of nicotinamide riboside (NR) and nicotinic acid riboside (NaR) to form nicotinamide mononucleotide (NMN) and nicotinic acid mononucleotide (NaMN). This is Nicotinamide riboside kinase (nrk1) from Schizosaccharomyces pombe (strain 972 / ATCC 24843) (Fission yeast).